The sequence spans 196 residues: MGLELPLILGTSSVFRREQMERLGIAFQAASPDFDETPMLGESAPQTALRLAEGKARSLAGRFPEALIVGADQVAWCDGRQWGKPMNLANAQKMLMHLSGREIEFYSAVVLLNTVTGRMQRHIDKTVVVMRKLDELHILRYLEREPDAVYCSCALKSEALGALLIERIESTDPNALIGLPVFRLVDFLKNEGVDVL.

The Proton acceptor role is filled by Asp72.

This sequence belongs to the Maf family. YceF subfamily. A divalent metal cation is required as a cofactor.

The protein resides in the cytoplasm. It carries out the reaction N(7)-methyl-GTP + H2O = N(7)-methyl-GMP + diphosphate + H(+). Functionally, nucleoside triphosphate pyrophosphatase that hydrolyzes 7-methyl-GTP (m(7)GTP). May have a dual role in cell division arrest and in preventing the incorporation of modified nucleotides into cellular nucleic acids. In Neisseria meningitidis serogroup A / serotype 4A (strain DSM 15465 / Z2491), this protein is 7-methyl-GTP pyrophosphatase.